The chain runs to 480 residues: MKRYQMYVDGQWIDAENGKVDQVINPSTEEVLAEIQDGDQDDAERVLSVAKRAQSDWKRVPARQRAELLRKFAQEIRNNREHLAELLVSEQGKLYRVALGEVDVAASFIEYACDWARQMDGDIVQSDNVNEHIWIQKIPRGVVVAITAWNFPFALAGRKIGPALVAGNTIVVKPTSETPLATLELGYIAEKVGIPAGVLNIVTGGGASLGGALTSHRYTNMVTMTGSTPVGQQIIKASANNMAHVQLELGGKAPFIVMEDADLEQAAAAALHSRFDNCGQVCTCNERMYVHSSVYDEFMAIFMEKVQNIKVGNPMDPESDMGPKVNKRELDHMEALVAQALKEGAQLLHGGKRLTEGEFGKGFWFEPTILGNVQQSMTIVHEEAFGPILPVIKFDTFEEVIDYANDSEYGLATMICTRNMKYVHRLTHELECGEIYVNRGHGEQHQGFHNGYKLSGTGGEDGKYGFEQYLEKKTFYVNFD.

NADP(+) is bound by residues 149-150 (WN), 173-176 (KPTS), and 226-227 (GS). The Proton acceptor role is filled by Glu-248. Leu-249 contributes to the NADP(+) binding site. Catalysis depends on Cys-282, which acts as the Nucleophile. Residue Glu-383 participates in NADP(+) binding.

It belongs to the aldehyde dehydrogenase family.

It carries out the reaction 3,6-anhydro-alpha-L-galactopyranose + NADP(+) + H2O = 3,6-anhydro-L-galactonate + NADPH + 2 H(+). It catalyses the reaction 3,6-anhydro-alpha-L-galactopyranose + NAD(+) + H2O = 3,6-anhydro-L-galactonate + NADH + 2 H(+). In terms of biological role, involved in the degradation of 3,6-anhydro-L-galactose, which is the major monomeric sugar of red macroalgae. Catalyzes the oxidation of 3,6-anhydro-L-galactose (AHG) to form 3,6-anhydrogalactonate (AHGA). This is 3,6-anhydro-alpha-L-galactose dehydrogenase from Vibrio sp. (strain EJY3).